We begin with the raw amino-acid sequence, 371 residues long: uncharacterized protein (371 aa).

This sequence belongs to the glycerate kinase type-1 family.

This is an uncharacterized protein from Synechocystis sp. (strain ATCC 27184 / PCC 6803 / Kazusa).